The following is a 209-amino-acid chain: Small ribosomal subunit protein uS5 (209 aa).

Positions 48–111 (LEDEVLDINM…DAAKLNITYI (64 aa)) constitute an S5 DRBM domain.

Belongs to the universal ribosomal protein uS5 family. In terms of assembly, part of the 30S ribosomal subunit. Contacts protein S4.

Its function is as follows. With S4 and S12 plays an important role in translational accuracy. This Methanosarcina acetivorans (strain ATCC 35395 / DSM 2834 / JCM 12185 / C2A) protein is Small ribosomal subunit protein uS5.